The sequence spans 499 residues: Probable cytosol aminopeptidase (499 aa).

Lys-267 and Asp-272 together coordinate Mn(2+). Lys-279 is an active-site residue. Asp-290, Asp-349, and Glu-351 together coordinate Mn(2+). Arg-353 is an active-site residue.

Belongs to the peptidase M17 family. Mn(2+) is required as a cofactor.

Its subcellular location is the cytoplasm. It carries out the reaction Release of an N-terminal amino acid, Xaa-|-Yaa-, in which Xaa is preferably Leu, but may be other amino acids including Pro although not Arg or Lys, and Yaa may be Pro. Amino acid amides and methyl esters are also readily hydrolyzed, but rates on arylamides are exceedingly low.. The catalysed reaction is Release of an N-terminal amino acid, preferentially leucine, but not glutamic or aspartic acids.. Functionally, presumably involved in the processing and regular turnover of intracellular proteins. Catalyzes the removal of unsubstituted N-terminal amino acids from various peptides. The sequence is that of Probable cytosol aminopeptidase from Buchnera aphidicola subsp. Acyrthosiphon pisum (strain 5A).